We begin with the raw amino-acid sequence, 169 residues long: Putative tRNA (cytidine(34)-2'-O)-methyltransferase (169 aa).

S-adenosyl-L-methionine-binding residues include I79, G104, I125, and S133.

Belongs to the class IV-like SAM-binding methyltransferase superfamily. RNA methyltransferase TrmH family. TrmL subfamily.

It localises to the cytoplasm. The enzyme catalyses cytidine(34) in tRNA + S-adenosyl-L-methionine = 2'-O-methylcytidine(34) in tRNA + S-adenosyl-L-homocysteine + H(+). It carries out the reaction 5-carboxymethylaminomethyluridine(34) in tRNA(Leu) + S-adenosyl-L-methionine = 5-carboxymethylaminomethyl-2'-O-methyluridine(34) in tRNA(Leu) + S-adenosyl-L-homocysteine + H(+). Could methylate the ribose at the nucleotide 34 wobble position in tRNA. This chain is Putative tRNA (cytidine(34)-2'-O)-methyltransferase, found in Listeria innocua serovar 6a (strain ATCC BAA-680 / CLIP 11262).